We begin with the raw amino-acid sequence, 552 residues long: MAFAVLLDQVGSLGRFQILQLAFLCIANILLFPHILLENFTAAVPGHRCWVHILDNDTVSHNDTGTLGQDALLRISIPLDSNLKPEKCRRFVHPQWQLLHLNRTFSNTSEPDTEPCVDGWVYEQSSFFSTVVTEWDLVCEWESQKSVVQSLFMAGSLLGSVIFGYLSDRFGRKMICSWCLLQLAISDTCAAFAPTFSVYCSLRFLAGSCVMTIMGHSFLLVIEWTNPQSRSMVTTLLLCASSVGQMLLGGLAFVIQDWRTLQLTVSIPIFVIFLSSRWLVESARWLITYNQLDKGLKELRRAARINGKKNAGEILTIEFLRSAMQEELDAARSQASIFCLFHAPRLRMIVLYLGFVRLAVSVPLYGLIFNLQYLGRNIYLFQVLFGAITATARFVALLVMNYMGRRISQVLFLLPVGLFILVNTFLDQEMQTLRTILATLGAGVLCIATTSGSVHFSELIPTVLRGTGGGINILFSRIGAALAPLLMIFVGFSPYLPWITYGVFPILAGLVVLLLPETKNLPLPNTIQDVENDRKETRKVKQEDNCMKVTQF.

The next 12 helical transmembrane spans lie at 16 to 36 (FQIL…PHIL), 146 to 166 (SVVQ…FGYL), 174 to 194 (MICS…AFAP), 204 to 224 (FLAG…VIEW), 235 to 255 (TLLL…AFVI), 260 to 280 (TLQL…RWLV), 349 to 369 (IVLY…GLIF), 380 to 400 (LFQV…LLVM), 407 to 427 (ISQV…TFLD), 436 to 456 (ILAT…SVHF), 473 to 493 (ILFS…VGFS), and 495 to 515 (YLPW…VLLL).

It belongs to the major facilitator (TC 2.A.1) superfamily. Organic cation transporter (TC 2.A.1.19) family.

The protein resides in the cell membrane. The catalysed reaction is estrone 3-sulfate(out) + glutarate(in) = estrone 3-sulfate(in) + glutarate(out). It carries out the reaction 17beta-estradiol 17-O-(beta-D-glucuronate)(out) + glutarate(in) = 17beta-estradiol 17-O-(beta-D-glucuronate)(in) + glutarate(out). It catalyses the reaction 5alpha-androstane-3alpha,17beta-diol 3-O-(beta-D-glucuronate)(out) + glutarate(in) = 5alpha-androstane-3alpha,17beta-diol 3-O-(beta-D-glucuronate)(in) + glutarate(out). The enzyme catalyses dehydroepiandrosterone 3-sulfate(out) + glutarate(in) = dehydroepiandrosterone 3-sulfate(in) + glutarate(out). The catalysed reaction is glutarate(in) + succinate(out) = glutarate(out) + succinate(in). Renal transmembrane organic anion/dicarboxylate exchanger that participates in the reabsorption of conjugated steroids, as well as bile acids, driven by an outward gradient of dicarboxylates such as glutarate or succinate. Transports androstanediol glucuronide (5alpha-androstane-3alpha,17beta-diol 3-O-(beta-D-glucuronate)), estrone 3-sulfate, and estradiol-17-glucuronide (17beta-estradiol 17-O-(beta-D-glucuronate)), but not taurocholate. In Microcebus murinus (Gray mouse lemur), this protein is Steroid transmembrane transporter SLC22A24.